The sequence spans 348 residues: Anthranilate phosphoribosyltransferase (348 aa).

5-phospho-alpha-D-ribose 1-diphosphate is bound by residues Gly-89, 92–93, Thr-97, 99–102, 117–125, and Ser-129; these read GD, NIST, and KHGNRSVSS. Residue Gly-89 coordinates anthranilate. Ser-101 provides a ligand contact to Mg(2+). Asn-120 is an anthranilate binding site. Residue Arg-175 participates in anthranilate binding. Asp-233 and Glu-234 together coordinate Mg(2+).

It belongs to the anthranilate phosphoribosyltransferase family. As to quaternary structure, homodimer. It depends on Mg(2+) as a cofactor.

It catalyses the reaction N-(5-phospho-beta-D-ribosyl)anthranilate + diphosphate = 5-phospho-alpha-D-ribose 1-diphosphate + anthranilate. The protein operates within amino-acid biosynthesis; L-tryptophan biosynthesis; L-tryptophan from chorismate: step 2/5. In terms of biological role, catalyzes the transfer of the phosphoribosyl group of 5-phosphorylribose-1-pyrophosphate (PRPP) to anthranilate to yield N-(5'-phosphoribosyl)-anthranilate (PRA). In Shewanella sp. (strain W3-18-1), this protein is Anthranilate phosphoribosyltransferase.